The sequence spans 58 residues: Large ribosomal subunit protein bL32c (58 aa).

Belongs to the bacterial ribosomal protein bL32 family.

It is found in the plastid. The protein resides in the chloroplast. The chain is Large ribosomal subunit protein bL32c from Chaetosphaeridium globosum (Charophycean green alga).